We begin with the raw amino-acid sequence, 368 residues long: 3-dehydroquinate synthase (368 aa).

NAD(+)-binding positions include 71–76 (DGEAFK), 105–109 (GVVGD), 129–130 (TT), Lys-142, Lys-151, and 169–172 (TLRT). Zn(2+)-binding residues include Glu-184, His-247, and His-264.

This sequence belongs to the sugar phosphate cyclases superfamily. Dehydroquinate synthase family. The cofactor is Co(2+). Requires Zn(2+) as cofactor. It depends on NAD(+) as a cofactor.

It is found in the cytoplasm. It catalyses the reaction 7-phospho-2-dehydro-3-deoxy-D-arabino-heptonate = 3-dehydroquinate + phosphate. It participates in metabolic intermediate biosynthesis; chorismate biosynthesis; chorismate from D-erythrose 4-phosphate and phosphoenolpyruvate: step 2/7. In terms of biological role, catalyzes the conversion of 3-deoxy-D-arabino-heptulosonate 7-phosphate (DAHP) to dehydroquinate (DHQ). The chain is 3-dehydroquinate synthase from Cupriavidus pinatubonensis (strain JMP 134 / LMG 1197) (Cupriavidus necator (strain JMP 134)).